A 224-amino-acid polypeptide reads, in one-letter code: Metalloproteinase inhibitor 4 (224 aa).

Positions 1 to 29 (MPWSPLAALSWALVLRLLALLWPPGRGEA) are cleaved as a signal peptide. Residue Cys-30 participates in Zn(2+) binding. 2 involved in metalloproteinase-binding regions span residues 30-33 (CSCA) and 99-100 (SS). Cystine bridges form between Cys-30-Cys-102, Cys-32-Cys-131, Cys-42-Cys-156, Cys-158-Cys-205, Cys-163-Cys-168, and Cys-176-Cys-197. The region spanning 30–156 (CSCAPAHPQQ…SLNHHYHQNC (127 aa)) is the NTR domain.

It belongs to the protease inhibitor I35 (TIMP) family. Expressed in retina, smooth muscle, skin, pancreas, skeletal muscle, heart, brain, lung, kidney and testis. Not found in cartilage, spleen and liver.

It localises to the secreted. Functionally, complexes with metalloproteinases (such as collagenases) and irreversibly inactivates them by binding to their catalytic zinc cofactor. The sequence is that of Metalloproteinase inhibitor 4 (Timp4) from Rattus norvegicus (Rat).